Consider the following 42-residue polypeptide: Aryl-alcohol dehydrogenase (42 aa).

This sequence belongs to the zinc-containing alcohol dehydrogenase family. Homodimer. It depends on Zn(2+) as a cofactor.

It catalyses the reaction an aromatic primary alcohol + NAD(+) = an aromatic aldehyde + NADH + H(+). Oxidizes primary alcohols with an aromatic or cyclohex-1-ene ring. It is highly specific for benzyl alcohol. This is Aryl-alcohol dehydrogenase from Acinetobacter guillouiae (Acinetobacter genomosp. 11).